The following is a 90-amino-acid chain: Probable Fe(2+)-trafficking protein (90 aa).

Belongs to the Fe(2+)-trafficking protein family.

Functionally, could be a mediator in iron transactions between iron acquisition and iron-requiring processes, such as synthesis and/or repair of Fe-S clusters in biosynthetic enzymes. The protein is Probable Fe(2+)-trafficking protein of Stutzerimonas stutzeri (strain A1501) (Pseudomonas stutzeri).